A 673-amino-acid polypeptide reads, in one-letter code: Inactive polyglycylase TTLL10 (673 aa).

The interval 1-132 is disordered; it reads MDHSCTRFIH…ADSDDTNAAG (132 aa). Over residues 8–36 the composition is skewed to basic residues; it reads FIHRRGPPTRTRAGFKRGKRPRIQQRPRA. Residues 52 to 62 show a composition bias toward pro residues; it reads ASQPGPCPAPG. Residues 89-105 are compositionally biased toward basic and acidic residues; sequence PDHDADGHCGPDLEGAE. Residues 155-552 enclose the TTL domain; that stretch reads PGPFFYIGGS…TFRKSLRGQK (398 aa). Residues 362–365, lysine 375, and aspartate 377 each bind ATP; that span reads QRYI. A disordered region spans residues 569–673; it reads EADPRPHLGG…EREEPENARP (105 aa). The segment covering 612–627 has biased composition (pro residues); sequence PAPPPLVPQRPRPPGP. The span at 661 to 673 shows a compositional bias: basic and acidic residues; sequence AKEEREEPENARP.

Its function is as follows. Inactive polyglycylase. The chain is Inactive polyglycylase TTLL10 from Homo sapiens (Human).